We begin with the raw amino-acid sequence, 441 residues long: 3'-N-debenzoyl-2'-deoxytaxol N-benzoyltransferase (441 aa).

Residues histidine 163 and aspartate 373 each act as proton acceptor in the active site.

It belongs to the plant acyltransferase family.

It catalyses the reaction 3'-N-debenzoyltaxol + benzoyl-CoA = paclitaxel + CoA + H(+). It functions in the pathway alkaloid biosynthesis; taxol biosynthesis. Its function is as follows. Catalyzes the stereoselective coupling of the surrogate substrate N-debenzoyl-(3'RS)-2'-deoxytaxol with benzoyl-CoA to form predominantly one 3'-epimer of 2'-deoxytaxol. This enzymatic reaction constitutes the final acylation in the taxol biosynthetic pathway. This is 3'-N-debenzoyl-2'-deoxytaxol N-benzoyltransferase from Taxus canadensis (Canadian yew).